Consider the following 25-residue polypeptide: Bombinin-like peptide 4 (25 aa).

The residue at position 25 (phenylalanine 25) is a Phenylalanine amide.

It belongs to the bombinin family. As to expression, expressed by the skin glands.

It localises to the secreted. In terms of biological role, has antimicrobial activity, but no hemolytic activity. Preference on killing Gram-negative non-enteric bacteria. The protein is Bombinin-like peptide 4 of Bombina orientalis (Oriental fire-bellied toad).